A 311-amino-acid chain; its full sequence is 4-hydroxy-tetrahydrodipicolinate synthase (311 aa).

Thr51 lines the pyruvate pocket. Tyr140 (proton donor/acceptor) is an active-site residue. Lys168 serves as the catalytic Schiff-base intermediate with substrate. Pyruvate is bound at residue Ile209.

Belongs to the DapA family. Homotetramer; dimer of dimers.

Its subcellular location is the cytoplasm. The catalysed reaction is L-aspartate 4-semialdehyde + pyruvate = (2S,4S)-4-hydroxy-2,3,4,5-tetrahydrodipicolinate + H2O + H(+). It functions in the pathway amino-acid biosynthesis; L-lysine biosynthesis via DAP pathway; (S)-tetrahydrodipicolinate from L-aspartate: step 3/4. Functionally, catalyzes the condensation of (S)-aspartate-beta-semialdehyde [(S)-ASA] and pyruvate to 4-hydroxy-tetrahydrodipicolinate (HTPA). This is 4-hydroxy-tetrahydrodipicolinate synthase from Streptococcus pneumoniae (strain Taiwan19F-14).